Reading from the N-terminus, the 207-residue chain is Superoxide dismutase [Mn] (207 aa).

Mn(2+) is bound by residues H28, H76, D160, and H164.

It belongs to the iron/manganese superoxide dismutase family. It depends on Mn(2+) as a cofactor.

It carries out the reaction 2 superoxide + 2 H(+) = H2O2 + O2. In terms of biological role, destroys superoxide anion radicals which are normally produced within the cells and which are toxic to biological systems. The sequence is that of Superoxide dismutase [Mn] (sodA) from Nocardia asteroides.